An 867-amino-acid polypeptide reads, in one-letter code: Cation/H(+) antiporter 23, chloroplastic (867 aa).

The next 12 helical transmembrane spans lie at 43 to 63, 75 to 95, 112 to 132, 146 to 166, 175 to 195, 212 to 232, 242 to 262, 283 to 303, 336 to 356, 362 to 382, 393 to 413, and 427 to 447; these read SGSTLASSLPFFITQLFVANL, LYLPPFVAQILCGLLFSPSVL, MVLETFANLALVYNIFLLGLG, VIIAFTGLLVALPVGAFLYYL, IISGCVFWSVALACTNFPDLA, AMCAAIVTDLCTWVLLVFGFA, KMMPFVIITTAIFVLLCIFVI, HVWFILGGVVLCGLITDACGV, GILMPLFYIICGLRADIGFML, FMMVVVICSSFLVKIVTTVIT, AFAIGALMNTKGTLSLVVLNA, and HMTIALLVMSLVVEPLLAFAY. The disordered stretch occupies residues 848–867; that stretch reads SMYEDEDEDDEEDHQYGIHR. Over residues 851 to 860 the composition is skewed to acidic residues; that stretch reads EDEDEDDEED.

This sequence belongs to the monovalent cation:proton antiporter 2 (CPA2) transporter (TC 2.A.37) family. CHX (TC 2.A.37.4) subfamily. In terms of tissue distribution, specifically expressed in flower buds and pollen. Expressed in leaves, roots and stems.

It localises to the plastid. Its subcellular location is the chloroplast membrane. The protein localises to the endoplasmic reticulum membrane. Its function is as follows. Operates as a K(+)/H(+) antiporter or Na(+)/H(+) antiporter of the chloroplast envelope that functions in pH homeostasis and chloroplast development. Monovalent cation transporter with a preference for Cs(+), K(+) and Rb(+) relative to Na(+) or Li(+). Required for pollen tube guidance, but not for normal pollen development. May also be involved in the development or function of the female gametophyte. The sequence is that of Cation/H(+) antiporter 23, chloroplastic (CHX23) from Arabidopsis thaliana (Mouse-ear cress).